The primary structure comprises 447 residues: Rab GDP dissociation inhibitor alpha (447 aa).

This sequence belongs to the Rab GDI family. As to quaternary structure, interacts with RHOH. Interacts with the non-phosphorylated forms of RAB1A, RAB3A, RAB5A, RAB5B, RAB5C, RAB8A, RAB8B, RAB10, RAB12, RAB35, and RAB43. In terms of tissue distribution, brain; predominant in neural and sensory tissues.

It is found in the cytoplasm. The protein resides in the golgi apparatus. Its subcellular location is the trans-Golgi network. Its function is as follows. Regulates the GDP/GTP exchange reaction of most Rab proteins by inhibiting the dissociation of GDP from them, and the subsequent binding of GTP to them. Promotes the dissociation of GDP-bound Rab proteins from the membrane and inhibits their activation. Promotes the dissociation of RAB1A, RAB3A, RAB5A and RAB10 from membranes. The polypeptide is Rab GDP dissociation inhibitor alpha (GDI1) (Homo sapiens (Human)).